A 177-amino-acid polypeptide reads, in one-letter code: KxDL motif-containing protein 1 (177 aa).

Met-1 bears the N-acetylmethionine mark. Positions 100-177 (SHIPEGSFLE…TDDEEETHEE (78 aa)) are disordered. Residues 125-145 (ATSEQSTGSCDTSPDTVSPSL) are compositionally biased toward polar residues.

This sequence belongs to the KXD1 family. As to quaternary structure, component of the BLOC-one-related complex (BORC) which is composed of BLOC1S1, BLOC1S2, BORCS5, BORCS6, BORCS7, BORCS8, KXD1 and SNAPIN. Associates with the BLOC-1 complex. Interacts with BLOC1S1. Interacts with DTNBP1/BLOC1S7 (via coiled-coil domain). Widely expressed.

The protein resides in the lysosome membrane. As part of the BORC complex may play a role in lysosomes movement and localization at the cell periphery. Associated with the cytosolic face of lysosomes, the BORC complex may recruit ARL8B and couple lysosomes to microtubule plus-end-directed kinesin motor. May also be involved in the biogenesis of lysosome-related organelles such as melanosomes. This is KxDL motif-containing protein 1 (Kxd1) from Mus musculus (Mouse).